A 339-amino-acid chain; its full sequence is Dihydroorotate dehydrogenase (quinone) (339 aa).

FMN-binding positions include 64–68 (AGADK) and T88. K68 lines the substrate pocket. 113–117 (NRNGF) contacts substrate. Residues N141 and N174 each contribute to the FMN site. N174 provides a ligand contact to substrate. S177 serves as the catalytic Nucleophile. N179 serves as a coordination point for substrate. Residues K219 and T247 each contribute to the FMN site. Substrate is bound at residue 248-249 (NT). Residues G270, G299, and 320-321 (YS) each bind FMN.

The protein belongs to the dihydroorotate dehydrogenase family. Type 2 subfamily. As to quaternary structure, monomer. FMN is required as a cofactor.

It is found in the cell membrane. It catalyses the reaction (S)-dihydroorotate + a quinone = orotate + a quinol. It functions in the pathway pyrimidine metabolism; UMP biosynthesis via de novo pathway; orotate from (S)-dihydroorotate (quinone route): step 1/1. Functionally, catalyzes the conversion of dihydroorotate to orotate with quinone as electron acceptor. This Haemophilus influenzae (strain ATCC 51907 / DSM 11121 / KW20 / Rd) protein is Dihydroorotate dehydrogenase (quinone) (pyrD).